The sequence spans 153 residues: Probable disulfide formation protein (153 aa).

Residues 4-23 (DTRLYLAWLVALAATLGSLY) traverse the membrane as a helical segment. Residues cysteine 33 and cysteine 36 are joined by a disulfide bond. Transmembrane regions (helical) follow at residues 38–57 (AQRI…AFVG) and 64–81 (YVLP…FQNL). A disulfide bond links cysteine 93 and cysteine 101. A helical transmembrane segment spans residues 117–139 (RALTIPVLSMIAFALILALLSWP).

Belongs to the DsbB family. BdbC subfamily.

The protein resides in the cell membrane. Required for disulfide bond formation in some proteins. The protein is Probable disulfide formation protein of Deinococcus radiodurans (strain ATCC 13939 / DSM 20539 / JCM 16871 / CCUG 27074 / LMG 4051 / NBRC 15346 / NCIMB 9279 / VKM B-1422 / R1).